The primary structure comprises 428 residues: Serine--tRNA ligase (428 aa).

231–233 contacts L-serine; it reads TAE. 262-264 serves as a coordination point for ATP; sequence RSE. Glu-285 contacts L-serine. Residue 349 to 352 participates in ATP binding; that stretch reads EISS. Ser-385 lines the L-serine pocket.

The protein belongs to the class-II aminoacyl-tRNA synthetase family. Type-1 seryl-tRNA synthetase subfamily. Homodimer. The tRNA molecule binds across the dimer.

It is found in the cytoplasm. The catalysed reaction is tRNA(Ser) + L-serine + ATP = L-seryl-tRNA(Ser) + AMP + diphosphate + H(+). It carries out the reaction tRNA(Sec) + L-serine + ATP = L-seryl-tRNA(Sec) + AMP + diphosphate + H(+). The protein operates within aminoacyl-tRNA biosynthesis; selenocysteinyl-tRNA(Sec) biosynthesis; L-seryl-tRNA(Sec) from L-serine and tRNA(Sec): step 1/1. Functionally, catalyzes the attachment of serine to tRNA(Ser). Is also able to aminoacylate tRNA(Sec) with serine, to form the misacylated tRNA L-seryl-tRNA(Sec), which will be further converted into selenocysteinyl-tRNA(Sec). The chain is Serine--tRNA ligase from Staphylococcus epidermidis (strain ATCC 35984 / DSM 28319 / BCRC 17069 / CCUG 31568 / BM 3577 / RP62A).